The primary structure comprises 171 residues: 3-hydroxydecanoyl-[acyl-carrier-protein] dehydratase (171 aa).

His-70 is a catalytic residue.

This sequence belongs to the thioester dehydratase family. FabA subfamily. As to quaternary structure, homodimer.

It localises to the cytoplasm. The catalysed reaction is a (3R)-hydroxyacyl-[ACP] = a (2E)-enoyl-[ACP] + H2O. It catalyses the reaction (3R)-hydroxydecanoyl-[ACP] = (2E)-decenoyl-[ACP] + H2O. The enzyme catalyses (2E)-decenoyl-[ACP] = (3Z)-decenoyl-[ACP]. It functions in the pathway lipid metabolism; fatty acid biosynthesis. In terms of biological role, necessary for the introduction of cis unsaturation into fatty acids. Catalyzes the dehydration of (3R)-3-hydroxydecanoyl-ACP to E-(2)-decenoyl-ACP and then its isomerization to Z-(3)-decenoyl-ACP. Can catalyze the dehydratase reaction for beta-hydroxyacyl-ACPs with saturated chain lengths up to 16:0, being most active on intermediate chain length. The sequence is that of 3-hydroxydecanoyl-[acyl-carrier-protein] dehydratase from Chromohalobacter salexigens (strain ATCC BAA-138 / DSM 3043 / CIP 106854 / NCIMB 13768 / 1H11).